The chain runs to 359 residues: 5-amino-6-(D-ribitylamino)uracil--L-tyrosine 4-hydroxyphenyl transferase (359 aa).

A Radical SAM core domain is found at 45–282 (VTYVVNANIN…TYAVSRIFFK (238 aa)). [4Fe-4S] cluster-binding residues include C59, C63, and C66.

It belongs to the radical SAM superfamily. CofH family. Consists of two subunits, CofG and CofH. The cofactor is [4Fe-4S] cluster.

The enzyme catalyses 5-amino-6-(D-ribitylamino)uracil + L-tyrosine + S-adenosyl-L-methionine = 5-amino-5-(4-hydroxybenzyl)-6-(D-ribitylimino)-5,6-dihydrouracil + 2-iminoacetate + 5'-deoxyadenosine + L-methionine + H(+). Its pathway is cofactor biosynthesis; coenzyme F0 biosynthesis. Its function is as follows. Catalyzes the radical-mediated synthesis of 5-amino-5-(4-hydroxybenzyl)-6-(D-ribitylimino)-5,6-dihydrouracil from 5-amino-6-(D-ribitylamino)uracil and L-tyrosine. The polypeptide is 5-amino-6-(D-ribitylamino)uracil--L-tyrosine 4-hydroxyphenyl transferase (Methanococcus maripaludis (strain C6 / ATCC BAA-1332)).